The following is a 350-amino-acid chain: Transmembrane protein 185B (350 aa).

The next 7 membrane-spanning stretches (helical) occupy residues 16–36 (LIYACLLLFSVLLPLRLDGII), 41–61 (WAVFAPIWLWKLLVIVGASVG), 81–101 (FKAMLIAVGIHLLLLMFEILV), 111–131 (FWLLVFMPLFFVSPVSVAACV), 168–188 (WLVVFVPLWILMSFLCLVVLY), 211–231 (VTMAISWITIVVPLLIFEVLL), and 240–260 (TFSYISIFIPLWLSLLTLMAT).

This sequence belongs to the TMEM185 family.

The protein resides in the membrane. The chain is Transmembrane protein 185B (Tmem185b) from Mus musculus (Mouse).